Reading from the N-terminus, the 272-residue chain is MSEMEVMASIMRDHILALLKEGKRVDGRSLEDYRDLEIKINVIEKAEGSAWVKLGNTQVLVGIKVDMGEPFPDLPEKGVITTNVELVPLASPSFEPGPPDERAIELARVVDRGIRESGAVELEKLVIVPGKLVRVVFIDVHVLDHDGNLLDASGIGAIAALMSAKMPKVVYDEESGEVQILDEYEPLPVSKMPIPVTIAKVGGNLLVDPNLDEELVMDGRITITTDENGMISSVQKSEGGSFKLEEVMYAIDLALTKAAEIREKVLEAVGAE.

This sequence belongs to the RNase PH family. Rrp42 subfamily. Component of the archaeal exosome complex. Forms a hexameric ring-like arrangement composed of 3 Rrp41-Rrp42 heterodimers. The hexameric ring associates with a trimer of Rrp4 and/or Csl4 subunits.

The protein resides in the cytoplasm. In terms of biological role, non-catalytic component of the exosome, which is a complex involved in RNA degradation. Contributes to the structuring of the Rrp41 active site. The chain is Exosome complex component Rrp42 from Thermococcus onnurineus (strain NA1).